A 556-amino-acid polypeptide reads, in one-letter code: Acetyl-coenzyme A thioesterase (556 aa).

The 113-residue stretch at 6 to 118 (APGEVLMSQA…FSTFVAKPVG (113 aa)) folds into the HotDog ACOT-type 1 domain. Lysine 34 is modified (N6-succinyllysine). CoA-binding positions include 54–56 (TAS) and 83–85 (STS). Lysine 97 is modified (N6-succinyllysine). Arginine 145 contributes to the CoA binding site. Lysine 160 and lysine 229 each carry N6-succinyllysine. One can recognise a HotDog ACOT-type 2 domain in the interval 180 to 295 (MGTSVQSIEL…FLIYNAVDDQ (116 aa)). 235–237 (KFR) is a binding site for CoA. Residues 327 to 536 (GRKYVISHKK…GGWSKSIEEA (210 aa)) enclose the START domain.

In terms of assembly, homodimer or homotetramer.

It is found in the cytoplasm. The protein resides in the cytosol. The enzyme catalyses acetyl-CoA + H2O = acetate + CoA + H(+). It carries out the reaction butanoyl-CoA + H2O = butanoate + CoA + H(+). The catalysed reaction is hexanoyl-CoA + H2O = hexanoate + CoA + H(+). It functions in the pathway lipid metabolism; fatty acid metabolism. Allosterically regulated by ATP (activator) and ADP (inhibitor). Cold labile, it dissociates into inactive monomers at low temperature. Catalyzes the hydrolysis of acyl-CoAs into free fatty acids and coenzyme A (CoASH), regulating their respective intracellular levels. Preferentially hydrolyzes acetyl-CoA. The polypeptide is Acetyl-coenzyme A thioesterase (Acot12) (Mus musculus (Mouse)).